A 702-amino-acid polypeptide reads, in one-letter code: Polyribonucleotide nucleotidyltransferase (702 aa).

Mg(2+) is bound by residues aspartate 485 and aspartate 491. Residues 552 to 612 (PRTEIICIDP…EGVKKAISII (61 aa)) form the KH domain. The 69-residue stretch at 622 to 690 (GEIYLGKVTK…NQGRINLSRK (69 aa)) folds into the S1 motif domain.

Belongs to the polyribonucleotide nucleotidyltransferase family. It depends on Mg(2+) as a cofactor.

Its subcellular location is the cytoplasm. It carries out the reaction RNA(n+1) + phosphate = RNA(n) + a ribonucleoside 5'-diphosphate. Functionally, involved in mRNA degradation. Catalyzes the phosphorolysis of single-stranded polyribonucleotides processively in the 3'- to 5'-direction. The sequence is that of Polyribonucleotide nucleotidyltransferase from Clostridium botulinum (strain ATCC 19397 / Type A).